The primary structure comprises 65 residues: MKFHLLFFILLFSITILTGKRSYPEYGSLDLRKECRMSKGHCKLQCSENEIRIAFCIRPGTHCCI.

An N-terminal signal peptide occupies residues 1-19; that stretch reads MKFHLLFFILLFSITILTG. Intrachain disulfides connect Cys-35-Cys-63, Cys-42-Cys-56, and Cys-46-Cys-64.

The protein belongs to the beta-defensin family.

It localises to the secreted. In terms of biological role, has antibacterial activity. In Rattus norvegicus (Rat), this protein is Beta-defensin 17 (Defb17).